A 118-amino-acid polypeptide reads, in one-letter code: Fluoride-specific ion channel FluC 2 (118 aa).

Helical transmembrane passes span 1–21 (MIEA…RFAI), 33–53 (FPLA…YIIG), 55–75 (GVTT…FTTF), and 91–111 (ISTF…FAFL). Na(+) is bound by residues Gly-70 and Thr-73.

Belongs to the fluoride channel Fluc/FEX (TC 1.A.43) family.

It is found in the cell membrane. The catalysed reaction is fluoride(in) = fluoride(out). Its activity is regulated as follows. Na(+) is not transported, but it plays an essential structural role and its presence is essential for fluoride channel function. Its function is as follows. Fluoride-specific ion channel. Important for reducing fluoride concentration in the cell, thus reducing its toxicity. The polypeptide is Fluoride-specific ion channel FluC 2 (Bacillus cereus (strain ATCC 14579 / DSM 31 / CCUG 7414 / JCM 2152 / NBRC 15305 / NCIMB 9373 / NCTC 2599 / NRRL B-3711)).